The chain runs to 779 residues: Chloride channel protein CLC-c (779 aa).

Position 27 is a phosphoserine (S27). The next 12 helical transmembrane spans lie at 92–112 (TFLK…VGFL), 142–162 (FAFA…CAFI), 190–210 (STLF…FVVG), 215–235 (MVHT…KKYR), 257–277 (GAAA…LFAL), 287–307 (ALLW…RSLI), 341–361 (LAIV…NYLV), 380–400 (IMLV…LPWL), 466–486 (LAIF…IAIP), 488–508 (GLFI…GRLL), 520–540 (SLLG…SLCV), and 541–561 (ILLE…VLLI). One can recognise a CBS 1 domain in the interval 601–659 (DVVSGALISFSRVEKVGVIWQALKMTRHNGFPVIDEPPFTEASELCGIALRSHLLVLLQ). At S672 the chain carries Phosphoserine. The CBS 2 domain maps to 713–777 (ITNTSPYTVL…VLGLYPHIDP (65 aa)). Residues 741-761 (HLCVVPKTPGRPPIVGILTRH) form a helical membrane-spanning segment.

This sequence belongs to the chloride channel (TC 2.A.49) family. In terms of assembly, homodimer. Interacts with PP2A5. Broadly expressed in the plant.

The protein resides in the membrane. In terms of biological role, voltage-gated chloride channel. The polypeptide is Chloride channel protein CLC-c (CLC-C) (Arabidopsis thaliana (Mouse-ear cress)).